The chain runs to 357 residues: tRNA-specific 2-thiouridylase MnmA (357 aa).

ATP is bound by residues Gly-7 to Ser-14 and Leu-33. The Nucleophile role is filled by Cys-94. A disulfide bridge links Cys-94 with Cys-193. Gly-119 lines the ATP pocket. The segment at Lys-143–Gln-145 is interaction with tRNA. The active-site Cysteine persulfide intermediate is the Cys-193. The interaction with tRNA stretch occupies residues Arg-298–Tyr-299.

The protein belongs to the MnmA/TRMU family.

It is found in the cytoplasm. It catalyses the reaction S-sulfanyl-L-cysteinyl-[protein] + uridine(34) in tRNA + AH2 + ATP = 2-thiouridine(34) in tRNA + L-cysteinyl-[protein] + A + AMP + diphosphate + H(+). In terms of biological role, catalyzes the 2-thiolation of uridine at the wobble position (U34) of tRNA, leading to the formation of s(2)U34. The polypeptide is tRNA-specific 2-thiouridylase MnmA (Synechococcus sp. (strain ATCC 27144 / PCC 6301 / SAUG 1402/1) (Anacystis nidulans)).